Here is a 614-residue protein sequence, read N- to C-terminus: Translation initiation factor IF-2 (614 aa).

The tr-type G domain occupies 115 to 283 (ARAPIVTIMG…ILLIAELNNY (169 aa)). The interval 124 to 131 (GHVDHGKT) is G1. 124–131 (GHVDHGKT) is a binding site for GTP. Positions 149–153 (GITQH) are G2. Residues 170 to 173 (DTPG) are G3. GTP-binding positions include 170 to 174 (DTPGH) and 224 to 227 (NKMD). Residues 224–227 (NKMD) form a G4 region. A G5 region spans residues 260–262 (SAL).

It belongs to the TRAFAC class translation factor GTPase superfamily. Classic translation factor GTPase family. IF-2 subfamily.

Its subcellular location is the cytoplasm. Functionally, one of the essential components for the initiation of protein synthesis. Protects formylmethionyl-tRNA from spontaneous hydrolysis and promotes its binding to the 30S ribosomal subunits. Also involved in the hydrolysis of GTP during the formation of the 70S ribosomal complex. The chain is Translation initiation factor IF-2 from Ureaplasma parvum serovar 3 (strain ATCC 27815 / 27 / NCTC 11736).